A 337-amino-acid polypeptide reads, in one-letter code: tRNA N6-adenosine threonylcarbamoyltransferase (337 aa).

His-111 and His-115 together coordinate Fe cation. Substrate contacts are provided by residues 134–138, Asp-167, Gly-180, and Asn-272; that span reads LVSGG. Residue Asp-300 participates in Fe cation binding.

It belongs to the KAE1 / TsaD family. The cofactor is Fe(2+).

It localises to the cytoplasm. The enzyme catalyses L-threonylcarbamoyladenylate + adenosine(37) in tRNA = N(6)-L-threonylcarbamoyladenosine(37) in tRNA + AMP + H(+). In terms of biological role, required for the formation of a threonylcarbamoyl group on adenosine at position 37 (t(6)A37) in tRNAs that read codons beginning with adenine. Is involved in the transfer of the threonylcarbamoyl moiety of threonylcarbamoyl-AMP (TC-AMP) to the N6 group of A37, together with TsaE and TsaB. TsaD likely plays a direct catalytic role in this reaction. This chain is tRNA N6-adenosine threonylcarbamoyltransferase, found in Klebsiella pneumoniae (strain 342).